A 222-amino-acid chain; its full sequence is Small ribosomal subunit protein uS3 (222 aa).

The region spanning isoleucine 39 to lysine 107 is the KH type-2 domain.

Belongs to the universal ribosomal protein uS3 family. In terms of assembly, part of the 30S ribosomal subunit. Forms a tight complex with proteins S10 and S14.

Its function is as follows. Binds the lower part of the 30S subunit head. Binds mRNA in the 70S ribosome, positioning it for translation. The polypeptide is Small ribosomal subunit protein uS3 (Carboxydothermus hydrogenoformans (strain ATCC BAA-161 / DSM 6008 / Z-2901)).